We begin with the raw amino-acid sequence, 99 residues long: Small ribosomal subunit protein eS24 (99 aa).

The protein belongs to the eukaryotic ribosomal protein eS24 family.

This is Small ribosomal subunit protein eS24 from Methanothrix thermoacetophila (strain DSM 6194 / JCM 14653 / NBRC 101360 / PT) (Methanosaeta thermophila).